The following is a 295-amino-acid chain: ATP synthase gamma chain (295 aa).

This sequence belongs to the ATPase gamma chain family. In terms of assembly, F-type ATPases have 2 components, CF(1) - the catalytic core - and CF(0) - the membrane proton channel. CF(1) has five subunits: alpha(3), beta(3), gamma(1), delta(1), epsilon(1). CF(0) has three main subunits: a, b and c.

The protein resides in the cell inner membrane. Its function is as follows. Produces ATP from ADP in the presence of a proton gradient across the membrane. The gamma chain is believed to be important in regulating ATPase activity and the flow of protons through the CF(0) complex. In Sulfurovum sp. (strain NBC37-1), this protein is ATP synthase gamma chain.